Consider the following 355-residue polypeptide: Neutral protease 2 homolog AFUB_100460 (355 aa).

The N-terminal stretch at 1 to 19 (MKITALASAILAVAQGALA) is a signal peptide. A propeptide spanning residues 20-172 (LPARAPALDI…PASIKPLDRR (153 aa)) is cleaved from the precursor. Disulfide bonds link Cys179–Cys251 and Cys258–Cys276. Zn(2+) is bound at residue His300. Glu301 is a catalytic residue. Residues His304 and Asp315 each coordinate Zn(2+).

The protein belongs to the peptidase M35 family. Requires Zn(2+) as cofactor.

The protein resides in the secreted. The enzyme catalyses Preferential cleavage of bonds with hydrophobic residues in P1'. Also 3-Asn-|-Gln-4 and 8-Gly-|-Ser-9 bonds in insulin B chain.. Its function is as follows. Secreted metalloproteinase that allows assimilation of proteinaceous substrates. Shows high activities on basic nuclear substrates such as histone and protamine. May be involved in virulence. This chain is Neutral protease 2 homolog AFUB_100460, found in Aspergillus fumigatus (strain CBS 144.89 / FGSC A1163 / CEA10) (Neosartorya fumigata).